The sequence spans 500 residues: FAD-linked oxidoreductase chyH (500 aa).

Residues 1–20 form the signal peptide; it reads MRLQAVTAVAAWAVASACQS. The region spanning 65–235 is the FAD-binding PCMH-type domain; it reads LEVPTVNIVI…TSVTSKTYDI (171 aa). N-linked (GlcNAc...) asparagine glycans are attached at residues Asn199, Asn266, Asn275, and Asn383.

Belongs to the oxygen-dependent FAD-linked oxidoreductase family. Requires FAD as cofactor.

The protein operates within pigment biosynthesis. Functionally, FAD-linked oxidoreductase; part of the gene cluster that mediates the biosynthesis of the yellow pigment chrysogine. the NRPS chyA mediates the condensation of anthranilic acid and alanine into the intermediate 2-(2-aminopropanamido)benzoic acid. The remainder of the pathway is highly branched yielding at least 13 chrysogine-related compounds. The malonyl transferase chyE converts 2-(2-aminopropanamido)benzoic acid and 2-(2-aminopropanamido)benzamidine into 2-(2-(2-carboxyacetamido)propanamido)benzoic acid and 3-((1-((2-carbamoylphenyl)amino)-1-oxopropan-2-yl)amino)-3-oxopropanoic acid, respectively. ChyD is an amidase, being responsible for the amidation of the carboxylic acid moiety of 2-(2-aminopropanamido)benzoic acid, 2-(2-(2-carboxyacetamido)propanamido)benzoic acid and 2-(2-((4-amino-1-carboxy-4-oxobutyl)amino)propanamido)benzoic acid. ChyC is involved in the same reactions as ChyD, but plays a more minor role in the amidation reactions compared to chyD. The oxidoreductases chyH and chyM are involved in oxidation reactions that form N-pyruvoylanthranilamide from 2-(2-aminopropanamido)benzamidine and (1-((2-carbamoylphenyl)amino)-1-oxopropan-2-yl)glutamine, respectively. N-pyruvoylanthranilamide is further converted via two further branches in the pathway, yielding chrysogine and additional chrysogine-related coumpounds. Chrysogine is likely formed by a spontaneous ring closure from N-pyruvoylanthranilamide. In Penicillium rubens (strain ATCC 28089 / DSM 1075 / NRRL 1951 / Wisconsin 54-1255) (Penicillium chrysogenum), this protein is FAD-linked oxidoreductase chyH.